The sequence spans 245 residues: tRNA pseudouridine synthase A (245 aa).

The active-site Nucleophile is aspartate 52. A substrate-binding site is contributed by tyrosine 111.

This sequence belongs to the tRNA pseudouridine synthase TruA family. Homodimer.

It catalyses the reaction uridine(38/39/40) in tRNA = pseudouridine(38/39/40) in tRNA. In terms of biological role, formation of pseudouridine at positions 38, 39 and 40 in the anticodon stem and loop of transfer RNAs. The polypeptide is tRNA pseudouridine synthase A (Rickettsia africae (strain ESF-5)).